Here is a 339-residue protein sequence, read N- to C-terminus: Deubiquitinase and deneddylase Dub2 (339 aa).

The chain crosses the membrane as a helical span at residues 36–56 (IIIALFLIVISCGLILCAYTF). Catalysis depends on residues His-203, Asp-220, and Cys-282.

It belongs to the peptidase C48 family.

It localises to the secreted. The protein resides in the host cell. It is found in the membrane. Functionally, effector proteins function to alter host cell physiology and promote bacterial survival in host tissues. This protease possesses deubiquitinating and deneddylating activities. The chain is Deubiquitinase and deneddylase Dub2 (cdu2) from Chlamydia trachomatis serovar B (strain Jali20/OT).